We begin with the raw amino-acid sequence, 43 residues long: Protein PsbN (43 aa).

A helical transmembrane segment spans residues alanine 4–tyrosine 24.

This sequence belongs to the PsbN family.

The protein localises to the plastid. Its subcellular location is the chloroplast thylakoid membrane. May play a role in photosystem I and II biogenesis. This is Protein PsbN from Trieres chinensis (Marine centric diatom).